Consider the following 484-residue polypeptide: Regulatory protein ViaA (484 aa).

The protein belongs to the ViaA family. In terms of assembly, homodimer. Interacts with RavA.

The protein resides in the cytoplasm. Component of the RavA-ViaA chaperone complex, which may act on the membrane to optimize the function of some of the respiratory chains. ViaA stimulates the ATPase activity of RavA. This is Regulatory protein ViaA from Edwardsiella ictaluri (strain 93-146).